The following is a 162-amino-acid chain: Lipoprotein signal peptidase (162 aa).

Transmembrane regions (helical) follow at residues 56–76 and 84–104; these read FLPPTGLLFLTLAISAGVVWY and SPLFLTAFGLILGGGIGNLID. Active-site residues include D113 and D139. The chain crosses the membrane as a helical span at residues 132 to 152; the sequence is WPIFNVADSCITIGACMIVLF.

This sequence belongs to the peptidase A8 family.

The protein resides in the cell inner membrane. It carries out the reaction Release of signal peptides from bacterial membrane prolipoproteins. Hydrolyzes -Xaa-Yaa-Zaa-|-(S,diacylglyceryl)Cys-, in which Xaa is hydrophobic (preferably Leu), and Yaa (Ala or Ser) and Zaa (Gly or Ala) have small, neutral side chains.. The protein operates within protein modification; lipoprotein biosynthesis (signal peptide cleavage). In terms of biological role, this protein specifically catalyzes the removal of signal peptides from prolipoproteins. This Chlorobaculum tepidum (strain ATCC 49652 / DSM 12025 / NBRC 103806 / TLS) (Chlorobium tepidum) protein is Lipoprotein signal peptidase.